An 806-amino-acid polypeptide reads, in one-letter code: DNA topoisomerase 1 (806 aa).

Residues 1-15 (MSVVSNHHSNGNGNS) show a composition bias toward low complexity. The tract at residues 1 to 236 (MSVVSNHHSN…KKEPPKKKVK (236 aa)) is disordered. Residues 24–34 (DEIKKEVKDEP) are compositionally biased toward basic and acidic residues. 2 stretches are compositionally biased toward basic residues: residues 49–60 (RDKKEKKQKKRK) and 98–108 (EKKKSKKNNKK). A compositionally biased stretch (acidic residues) spans 113-127 (SSEDDDEESEGDVSE). Basic and acidic residues predominate over residues 128 to 137 (EDVKPQIHSD). Over residues 138–153 (DELEEEDEAPTTDDEE) the composition is skewed to acidic residues. The segment covering 159 to 176 (EKERRKKEKREKKERKEK) has biased composition (basic residues). Over residues 177–188 (KRLEKENRKIKE) the composition is skewed to basic and acidic residues. The span at 189-199 (EDDEDSDDEDD) shows a compositional bias: acidic residues. Positions 210–229 (KGAEKSKPSTSKKDAGGKKE) are enriched in basic and acidic residues. Interaction with DNA regions lie at residues 467–468 (KY), 530–535 (RAGNEK), and 634–636 (TVK). The region spanning 474–803 (SSKIKGEKDF…IDMTNSSDEE (330 aa)) is the Topo IB-type catalytic domain. Y761 (O-(3'-phospho-DNA)-tyrosine intermediate) is an active-site residue.

It belongs to the type IB topoisomerase family. Expressed in male germ cells and in mature sperm.

Its subcellular location is the nucleus. The protein localises to the nucleolus. It localises to the chromosome. It catalyses the reaction ATP-independent breakage of single-stranded DNA, followed by passage and rejoining.. Its function is as follows. Releases the supercoiling and torsional tension of DNA introduced during the DNA replication and transcription by transiently cleaving and rejoining one strand of the DNA duplex. Introduces a single-strand break via transesterification at a target site in duplex DNA. The scissile phosphodiester is attacked by the catalytic tyrosine of the enzyme, resulting in the formation of a DNA-(3'-phosphotyrosyl)-enzyme intermediate and the expulsion of a 5'-OH DNA strand. The free DNA strand then rotates around the intact phosphodiester bond on the opposing strand, thus removing DNA supercoils. Finally, in the religation step, the DNA 5'-OH attacks the covalent intermediate to expel the active-site tyrosine and restore the DNA phosphodiester backbone. Required for normal spermatogenesis and oogenesis. The chain is DNA topoisomerase 1 (top-1) from Caenorhabditis elegans.